Consider the following 200-residue polypeptide: Casparian strip membrane protein 1 (200 aa).

At Met1–Gly38 the chain is on the cytoplasmic side. A helical membrane pass occupies residues Ile39–Ala59. Residues Thr60–Gln88 lie on the Extracellular side of the membrane. A helical transmembrane segment spans residues Phe89–Val109. The Cytoplasmic portion of the chain corresponds to Val110–Arg121. A helical transmembrane segment spans residues Leu122–Ala142. Residues Ala143 to Gly175 are Extracellular-facing. Residue Asn153 is glycosylated (N-linked (GlcNAc...) asparagine). Residues Val176–Ala196 traverse the membrane as a helical segment. The Cytoplasmic portion of the chain corresponds to Leu197 to His200.

The protein belongs to the Casparian strip membrane proteins (CASP) family. Homodimer and heterodimers.

It is found in the cell membrane. In terms of biological role, regulates membrane-cell wall junctions and localized cell wall deposition. Required for establishment of the Casparian strip membrane domain (CSD) and the subsequent formation of Casparian strips, a cell wall modification of the root endodermis that determines an apoplastic barrier between the intraorganismal apoplasm and the extraorganismal apoplasm and prevents lateral diffusion. This Ricinus communis (Castor bean) protein is Casparian strip membrane protein 1.